Here is a 134-residue protein sequence, read N- to C-terminus: Complexin-2 (134 aa).

The tract at residues 1-114 (MDFVMKQALG…CGDEEEEEEE (114 aa)) is disordered. Over residues 15 to 85 (DMGKMLGGEE…EEKEAEEKAA (71 aa)) the composition is skewed to basic and acidic residues. Residues 28–84 (PDAQKKEEERQEALRQQEEERKAKHARMEAEREKVRQQIRDKYGLKKKEEKEAEEKA) are a coiled coil. Residues 41–97 (LRQQEEERKAKHARMEAEREKVRQQIRDKYGLKKKEEKEAEEKAALEQPCEGSLTRP) form an interaction with the SNARE complex region. S93 bears the Phosphoserine mark.

Belongs to the complexin/synaphin family. Binds to the SNARE core complex containing SNAP25, VAMP2 and STX1A. Nervous system. Also present in adrenal chromaffin cells (at protein level).

The protein resides in the cytoplasm. Its subcellular location is the cytosol. The protein localises to the presynapse. It localises to the nucleus. It is found in the perikaryon. Negatively regulates the formation of synaptic vesicle clustering at active zone to the presynaptic membrane in postmitotic neurons. Positively regulates a late step in exocytosis of various cytoplasmic vesicles, such as synaptic vesicles and other secretory vesicles. Also involved in mast cell exocytosis. The sequence is that of Complexin-2 (CPLX2) from Bos taurus (Bovine).